The sequence spans 273 residues: MRFLVLTGLSGAGKTTARGFLEDLGYFMVDNLPPRLWLPLLQEAAARGLARVGVVVDARALAFFQDLEEVLEALRPTVVYLEARPEVLLRRYNLTRRVHPLGAGNLMREIAEERRALAGLRGRAHLVVDTSELSPRGLKEALARFLGEEGGFLLRLVSFGFKWGPPQEADLVLDVRPLPNPHYDPALRPRTGLDPEVRRYVFSEAAEPYYRALLAVAGLAAEGARAEGRAFYTVAVGCTGGRHRSVAVAERLAEELSGRFAVEVVHRDVEREG.

8-15 (GLSGAGKT) provides a ligand contact to ATP. 57–60 (DARA) provides a ligand contact to GTP.

It belongs to the RapZ-like family.

Its function is as follows. Displays ATPase and GTPase activities. The sequence is that of Nucleotide-binding protein TTHA0319 from Thermus thermophilus (strain ATCC 27634 / DSM 579 / HB8).